A 383-amino-acid polypeptide reads, in one-letter code: Phospho-N-acetylmuramoyl-pentapeptide-transferase (383 aa).

The next 9 helical transmembrane spans lie at 26–46, 73–93, 98–118, 131–151, 182–202, 221–241, 258–278, 283–305, and 360–380; these read TAGAVATALILVILFAPGVIE, TMGGIFIVGSILISVLLWAEL, IILLTLSLVILSIAGFLDDFL, IYKIFFQTFVGIIIGVYLYYF, IFLPFASTIYIDLKILYIPFA, GLAIGLLIIMSMALAVLSYVS, AGEVTVFVGALIGAGLGFLWF, AQVFMGDVGSLSLGGVLGIIALF, and QVVFRFYIIGIIMALIGIATL.

The protein belongs to the glycosyltransferase 4 family. MraY subfamily. The cofactor is Mg(2+).

It is found in the cell inner membrane. It catalyses the reaction UDP-N-acetyl-alpha-D-muramoyl-L-alanyl-gamma-D-glutamyl-meso-2,6-diaminopimeloyl-D-alanyl-D-alanine + di-trans,octa-cis-undecaprenyl phosphate = di-trans,octa-cis-undecaprenyl diphospho-N-acetyl-alpha-D-muramoyl-L-alanyl-D-glutamyl-meso-2,6-diaminopimeloyl-D-alanyl-D-alanine + UMP. Its pathway is cell wall biogenesis; peptidoglycan biosynthesis. Its function is as follows. Catalyzes the initial step of the lipid cycle reactions in the biosynthesis of the cell wall peptidoglycan: transfers peptidoglycan precursor phospho-MurNAc-pentapeptide from UDP-MurNAc-pentapeptide onto the lipid carrier undecaprenyl phosphate, yielding undecaprenyl-pyrophosphoryl-MurNAc-pentapeptide, known as lipid I. The protein is Phospho-N-acetylmuramoyl-pentapeptide-transferase of Brachyspira hyodysenteriae (strain ATCC 49526 / WA1).